The following is a 178-amino-acid chain: Protein GrpE (178 aa).

Belongs to the GrpE family. As to quaternary structure, homodimer.

The protein resides in the cytoplasm. Participates actively in the response to hyperosmotic and heat shock by preventing the aggregation of stress-denatured proteins, in association with DnaK and GrpE. It is the nucleotide exchange factor for DnaK and may function as a thermosensor. Unfolded proteins bind initially to DnaJ; upon interaction with the DnaJ-bound protein, DnaK hydrolyzes its bound ATP, resulting in the formation of a stable complex. GrpE releases ADP from DnaK; ATP binding to DnaK triggers the release of the substrate protein, thus completing the reaction cycle. Several rounds of ATP-dependent interactions between DnaJ, DnaK and GrpE are required for fully efficient folding. The sequence is that of Protein GrpE from Rickettsia prowazekii (strain Madrid E).